We begin with the raw amino-acid sequence, 365 residues long: Ubiquitin carboxyl-terminal hydrolase 4 (365 aa).

Gly2 is lipidated: N-myristoyl glycine. Residues Phe23–Leu362 form the USP domain. The active-site Nucleophile is the Cys32. The Bipartite nuclear localization signal signature appears at Lys81–Lys98. The active-site Proton acceptor is the His310.

Belongs to the peptidase C19 family. Constitutively and ubiquitously expressed.

It localises to the nucleus. It catalyses the reaction Thiol-dependent hydrolysis of ester, thioester, amide, peptide and isopeptide bonds formed by the C-terminal Gly of ubiquitin (a 76-residue protein attached to proteins as an intracellular targeting signal).. In terms of biological role, recognizes and hydrolyzes the peptide bond at the C-terminal Gly of ubiquitin. Involved in the processing of poly-ubiquitin precursors as well as that of ubiquitinated proteins. Required for the correct development of pollen. The polypeptide is Ubiquitin carboxyl-terminal hydrolase 4 (UBP4) (Arabidopsis thaliana (Mouse-ear cress)).